A 318-amino-acid chain; its full sequence is NADH-ubiquinone oxidoreductase chain 1 (318 aa).

8 consecutive transmembrane segments (helical) span residues 2-22 (FLIN…FLTL), 69-89 (FLFT…WAPL), 102-122 (LLFI…SGWA), 146-166 (MTTI…TAFA), 171-191 (HLWL…STLA), 222-242 (LFFM…VILF), 253-273 (EIST…FLWV), and 294-314 (LPLT…LACI).

This sequence belongs to the complex I subunit 1 family.

Its subcellular location is the mitochondrion inner membrane. It carries out the reaction a ubiquinone + NADH + 5 H(+)(in) = a ubiquinol + NAD(+) + 4 H(+)(out). Core subunit of the mitochondrial membrane respiratory chain NADH dehydrogenase (Complex I) that is believed to belong to the minimal assembly required for catalysis. Complex I functions in the transfer of electrons from NADH to the respiratory chain. The immediate electron acceptor for the enzyme is believed to be ubiquinone. This chain is NADH-ubiquinone oxidoreductase chain 1 (MT-ND1), found in Loxodonta africana (African elephant).